The sequence spans 305 residues: Acetylglutamate kinase (305 aa).

Residues 75–76, R97, and N202 each bind substrate; that span reads GG.

It belongs to the acetylglutamate kinase family. ArgB subfamily.

Its subcellular location is the cytoplasm. It catalyses the reaction N-acetyl-L-glutamate + ATP = N-acetyl-L-glutamyl 5-phosphate + ADP. It participates in amino-acid biosynthesis; L-arginine biosynthesis; N(2)-acetyl-L-ornithine from L-glutamate: step 2/4. Functionally, catalyzes the ATP-dependent phosphorylation of N-acetyl-L-glutamate. The polypeptide is Acetylglutamate kinase (Rhodospirillum centenum (strain ATCC 51521 / SW)).